The chain runs to 299 residues: Leucine zipper transcription factor-like protein 1 (299 aa).

Positions 96-296 (LKLQTDISEL…DLRKRLAKYE (201 aa)) form a coiled coil. The interaction with BSS9 stretch occupies residues 145 to 299 (GAAELLNKEI…KRLAKYEPED (155 aa)).

It belongs to the LZTFL1 family. Self-associates. Interacts with BBS9; the interaction mediates the association of LZTL1 with the BBsome complex and regulates BBSome ciliary trafficking.

Its subcellular location is the cytoplasm. Its function is as follows. Regulates ciliary localization of the BBSome complex. Together with the BBSome complex, controls SMO ciliary trafficking and contributes to the sonic hedgehog (SHH) pathway regulation. May play a role in neurite outgrowth. May have tumor suppressor function. This is Leucine zipper transcription factor-like protein 1 (LZTFL1) from Bos taurus (Bovine).